Here is a 435-residue protein sequence, read N- to C-terminus: Sulfopropanediol 3-dehydrogenase (435 aa).

Residues tyrosine 119, glutamine 181, and asparagine 204 each contribute to the NAD(+) site. 2 residues coordinate Zn(2+): glutamine 249 and histidine 252. Residues glutamate 319 and histidine 320 each act as proton acceptor in the active site. 2 residues coordinate Zn(2+): aspartate 353 and histidine 412.

Belongs to the histidinol dehydrogenase family. HpsN subfamily. The cofactor is Zn(2+).

It catalyses the reaction (2R)-3-sulfopropanediol + 2 NAD(+) + H2O = (2R)-3-sulfolactate + 2 NADH + 3 H(+). Its function is as follows. Catalyzes the NAD-dependent oxidation of (R)-2,3-dihydroxypropane-1-sulfonate to (R)-3-sulfolactate. The sequence is that of Sulfopropanediol 3-dehydrogenase from Ruegeria pomeroyi (strain ATCC 700808 / DSM 15171 / DSS-3) (Silicibacter pomeroyi).